Reading from the N-terminus, the 221-residue chain is Endonuclease V (221 aa).

Mg(2+) is bound by residues aspartate 43 and aspartate 109.

It belongs to the endonuclease V family. Mg(2+) is required as a cofactor.

The protein resides in the cytoplasm. The enzyme catalyses Endonucleolytic cleavage at apurinic or apyrimidinic sites to products with a 5'-phosphate.. In terms of biological role, DNA repair enzyme involved in the repair of deaminated bases. Selectively cleaves double-stranded DNA at the second phosphodiester bond 3' to a deoxyinosine leaving behind the intact lesion on the nicked DNA. In Petrotoga mobilis (strain DSM 10674 / SJ95), this protein is Endonuclease V.